A 284-amino-acid chain; its full sequence is Bifunctional protein FolD (284 aa).

166–168 contributes to the NADP(+) binding site; the sequence is GAS.

This sequence belongs to the tetrahydrofolate dehydrogenase/cyclohydrolase family. Homodimer.

The enzyme catalyses (6R)-5,10-methylene-5,6,7,8-tetrahydrofolate + NADP(+) = (6R)-5,10-methenyltetrahydrofolate + NADPH. It catalyses the reaction (6R)-5,10-methenyltetrahydrofolate + H2O = (6R)-10-formyltetrahydrofolate + H(+). Its pathway is one-carbon metabolism; tetrahydrofolate interconversion. Catalyzes the oxidation of 5,10-methylenetetrahydrofolate to 5,10-methenyltetrahydrofolate and then the hydrolysis of 5,10-methenyltetrahydrofolate to 10-formyltetrahydrofolate. In Legionella pneumophila (strain Corby), this protein is Bifunctional protein FolD.